Consider the following 318-residue polypeptide: DNA repair nuclease/redox regulator APEX1 (318 aa).

Positions 1–33 (MPKRGKKGAVAEDGDELRTEPEAKKSKTAAKKN) are necessary for interaction with YBX1, binding to RNA, association together with NPM1 to rRNA, endoribonuclease activity on abasic RNA and localization in the nucleoli. The interval 1–60 (MPKRGKKGAVAEDGDELRTEPEAKKSKTAAKKNDKEAAGEGPALYEDPPDQKTSPSGKPA) is disordered. N6-acetyllysine; by EP300 is present on residues lysine 6 and lysine 7. The Nuclear localization signal (NLS) motif lies at 8-13 (GAVAED). Over residues 16 to 38 (ELRTEPEAKKSKTAAKKNDKEAA) the composition is skewed to basic and acidic residues. Residues 23-33 (AKKSKTAAKKN) are necessary for interaction with NPM1 and for efficient rRNA binding. Lysine 27, lysine 31, lysine 32, and lysine 35 each carry N6-acetyllysine. Serine 54 is subject to Phosphoserine. A Nuclear export signal (NES) motif is present at residues 64 to 80 (ICSWNVDGLRAWIKKKG). Position 65 is an S-nitrosocysteine; alternate (cysteine 65). An intrachain disulfide couples cysteine 65 to cysteine 93. Aspartate 70 contacts Mg(2+). S-nitrosocysteine; alternate is present on cysteine 93. Glutamate 96 contributes to the Mg(2+) binding site. Tyrosine 171 is an active-site residue. N6-acetyllysine is present on lysine 197. Residues aspartate 210 and asparagine 212 each coordinate Mg(2+). The Proton donor/acceptor role is filled by aspartate 210. Threonine 233 carries the phosphothreonine; by CDK5 modification. Positions 289 to 318 (HSLLPALCDSKIRSKALGSDHCPITLYLAL) are mitochondrial targeting sequence (MTS). Aspartate 308 serves as a coordination point for Mg(2+). S-nitrosocysteine is present on cysteine 310.

It belongs to the DNA repair enzymes AP/ExoA family. Monomer. Homodimer; disulfide-linked. Component of the SET complex, composed of at least APEX1, SET, ANP32A, HMGB2, NME1 and TREX1. Associates with the dimer XRCC5/XRCC6 in a DNA-dependent manner. Interacts with SIRT1; the interaction is increased in the context of genotoxic stress. Interacts with HDAC1, HDAC2 and HDAC3; the interactions are not dependent on the APEX1 acetylation status. Interacts with XRCC1; the interaction is induced by SIRT1 and increased with the APEX1 acetylated form. Interacts with NPM1 (via N-terminal domain); the interaction is RNA-dependent and decreases in hydrogen peroxide-damaged cells. Interacts (via N-terminus) with YBX1 (via C-terminus); the interaction is increased in presence of APEX1 acetylated at Lys-6 and Lys-7. Interacts with HNRNPL; the interaction is DNA-dependent. Interacts (via N-terminus) with KPNA1 and KPNA2. Interacts with TXN; the interaction stimulates the FOS/JUN AP-1 complex DNA-binding activity in a redox-dependent manner. Interacts with GZMA, KRT8, MDM2, POLB, PRDX6, PRPF19, RPLP0, TOMM20 and WDR77. Binds to CDK5. Mg(2+) serves as cofactor. Requires Mn(2+) as cofactor. Post-translationally, phosphorylated. Phosphorylation by kinase PKC or casein kinase CK2 results in enhanced redox activity that stimulates binding of the FOS/JUN AP-1 complex to its cognate binding site. AP-endodeoxyribonuclease activity is not affected by CK2-mediated phosphorylation. Phosphorylation of Thr-233 by CDK5 in response to MPP(+)/MPTP (1-methyl-4-phenylpyridinium) reduces AP-endodeoxyribonuclease activity resulting in accumulation of DNA damage and contributing to neuronal death. In terms of processing, acetylated on Lys-6 and Lys-7. Acetylation is increased by the transcriptional coactivator EP300 acetyltransferase, genotoxic agents like H(2)O(2) and methyl methanesulfonate (MMS). Acetylation increases its binding affinity to the negative calcium response element (nCaRE) DNA promoter. The acetylated form induces a stronger binding of YBX1 to the Y-box sequence in the MDR1 promoter than the unacetylated form. Deacetylated on lysines. Lys-6 and Lys-7 are deacetylated by SIRT1. Cleaved at Lys-31 by granzyme A to create the mitochondrial form; leading in reduction of binding to DNA, AP endodeoxyribonuclease activity, redox activation of transcription factors and to enhanced cell death. Cleaved by granzyme K; leading to intracellular ROS accumulation and enhanced cell death after oxidative stress. Post-translationally, cys-69 and Cys-93 are nitrosylated in response to nitric oxide (NO) and lead to the exposure of the nuclear export signal (NES). In terms of processing, ubiquitinated by MDM2; leading to translocation to the cytoplasm and proteasomal degradation.

It is found in the nucleus. The protein resides in the nucleolus. The protein localises to the nucleus speckle. It localises to the endoplasmic reticulum. Its subcellular location is the cytoplasm. It is found in the mitochondrion. It catalyses the reaction a deoxyribonucleotide-2'-deoxyribose-5'-monophosphate-DNA + H2O = a 5'-end 2'-deoxyribose-5'-monophosphate-DNA + a 3'-end 2'-deoxyribonucleotide-DNA + H(+). The catalysed reaction is Exonucleolytic cleavage in the 3'- to 5'-direction to yield nucleoside 5'-phosphates.. It carries out the reaction a 3'-end 2'-deoxyribonucleotide-3'-phosphoglycolate-DNA + H2O = 2-phosphoglycolate + a 3'-end 2'-deoxyribonucleotide-DNA + H(+). The enzyme catalyses a 3'-end 2'-deoxyribonucleotide-8-oxoguanine-DNA + H2O = 8-oxo-dGMP + a 3'-end 2'-deoxyribonucleotide-DNA + H(+). Its activity is regulated as follows. NPM1 stimulates endodeoxyribonuclease activity on double-stranded DNA with AP sites, but inhibits endoribonuclease activity on single-stranded RNA containing AP sites. Multifunctional protein that plays a central role in the cellular response to oxidative stress. The two major activities of APEX1 are DNA repair and redox regulation of transcriptional factors. Functions as an apurinic/apyrimidinic (AP) endodeoxyribonuclease in the base excision repair (BER) pathway of DNA lesions induced by oxidative and alkylating agents. Initiates repair of AP sites in DNA by catalyzing hydrolytic incision of the phosphodiester backbone immediately adjacent to the damage, generating a single-strand break with 5'-deoxyribose phosphate and 3'-hydroxyl ends. Also incises at AP sites in the DNA strand of DNA/RNA hybrids, single-stranded DNA regions of R-loop structures, and single-stranded RNA molecules. Operates at switch sites of immunoglobulin (Ig) constant regions where it mediates Ig isotype class switch recombination. Processes AP sites induced by successive action of AICDA and UNG. Generates staggered nicks in opposite DNA strands resulting in the formation of double-strand DNA breaks that are finally resolved via non-homologous end joining repair pathway. Has 3'-5' exodeoxyribonuclease activity on mismatched deoxyribonucleotides at the 3' termini of nicked or gapped DNA molecules during short-patch BER. Possesses DNA 3' phosphodiesterase activity capable of removing lesions (such as phosphoglycolate and 8-oxoguanine) blocking the 3' side of DNA strand breaks. Also acts as an endoribonuclease involved in the control of single-stranded RNA metabolism. Plays a role in regulating MYC mRNA turnover by preferentially cleaving in between UA and CA dinucleotides of the MYC coding region determinant (CRD). In association with NMD1, plays a role in the rRNA quality control process during cell cycle progression. Acts as a loading factor for POLB onto non-incised AP sites in DNA and stimulates the 5'-terminal deoxyribose 5'-phosphate (dRp) excision activity of POLB. Exerts reversible nuclear redox activity to regulate DNA binding affinity and transcriptional activity of transcriptional factors by controlling the redox status of their DNA-binding domain, such as the FOS/JUN AP-1 complex after exposure to IR. Involved in calcium-dependent down-regulation of parathyroid hormone (PTH) expression by binding to negative calcium response elements (nCaREs). Together with HNRNPL or the dimer XRCC5/XRCC6, associates with nCaRE, acting as an activator of transcriptional repression. May also play a role in the epigenetic regulation of gene expression by participating in DNA demethylation. Stimulates the YBX1-mediated MDR1 promoter activity, when acetylated at Lys-6 and Lys-7, leading to drug resistance. Plays a role in protection from granzyme-mediated cellular repair leading to cell death. Binds DNA and RNA. Associates, together with YBX1, on the MDR1 promoter. Together with NPM1, associates with rRNA. The chain is DNA repair nuclease/redox regulator APEX1 (APEX1) from Pan paniscus (Pygmy chimpanzee).